Here is a 126-residue protein sequence, read N- to C-terminus: DNA-directed RNA polymerase I subunit RPA12 (126 aa).

Positions 20, 23, 38, 41, 87, and 90 each coordinate Zn(2+). The segment at 20–41 adopts a C4-type zinc-finger fold; the sequence is CSDCGSVLPLPGAQDTVTCIRC. Residues 83 to 123 form a TFIIS-type zinc finger; the sequence is VDRRCPRCGHEGMAYHTRQMRSADEGQTVFYTCTNCKFQEK. The Hairpin motif lies at 106 to 107; that stretch reads DE. Residues C115 and C118 each contribute to the Zn(2+) site.

It belongs to the archaeal RpoM/eukaryotic RPA12/RPB9/RPC11 RNA polymerase family. Component of the RNA polymerase I (Pol I) complex consisting of 13 subunits: a ten-subunit catalytic core composed of POLR1A/RPA1, POLR1B/RPA2, POLR1C/RPAC1, POLR1D/RPAC2, POLR1H/RPA12, POLR2E/RPABC1, POLR2F/RPABC2, POLR2H/RPABC3, POLR2K/RPABC4 and POLR2L/RPABC5; a mobile stalk subunit POLR1F/RPA43 protruding from the core and additional subunits homologous to general transcription factors POLR1E/RPA49 and POLR1G/RPA34. Part of Pol I pre-initiation complex (PIC), in which Pol I core assembles with RRN3 and promoter-bound UTBF and SL1/TIF-IB complex.

It is found in the nucleus. It localises to the nucleolus. Functionally, core component of RNA polymerase I (Pol I), a DNA-dependent RNA polymerase which synthesizes ribosomal RNA precursors using the four ribonucleoside triphosphates as substrates. Can mediate Pol I proofreading of the nascent RNA transcript. Anchors into the Pol I active site to monitor transcription fidelity and cleave mis-incorporated 5'-ribonucleotides. This chain is DNA-directed RNA polymerase I subunit RPA12, found in Homo sapiens (Human).